The following is a 316-amino-acid chain: Transaldolase (316 aa).

Lys-132 functions as the Schiff-base intermediate with substrate in the catalytic mechanism.

This sequence belongs to the transaldolase family. Type 1 subfamily. In terms of assembly, homodimer.

The protein localises to the cytoplasm. The enzyme catalyses D-sedoheptulose 7-phosphate + D-glyceraldehyde 3-phosphate = D-erythrose 4-phosphate + beta-D-fructose 6-phosphate. It participates in carbohydrate degradation; pentose phosphate pathway; D-glyceraldehyde 3-phosphate and beta-D-fructose 6-phosphate from D-ribose 5-phosphate and D-xylulose 5-phosphate (non-oxidative stage): step 2/3. In terms of biological role, transaldolase is important for the balance of metabolites in the pentose-phosphate pathway. The chain is Transaldolase from Aliivibrio fischeri (strain MJ11) (Vibrio fischeri).